A 144-amino-acid polypeptide reads, in one-letter code: Transcription antitermination protein NusB (144 aa).

The protein belongs to the NusB family.

Functionally, involved in transcription antitermination. Required for transcription of ribosomal RNA (rRNA) genes. Binds specifically to the boxA antiterminator sequence of the ribosomal RNA (rrn) operons. The chain is Transcription antitermination protein NusB from Dictyoglomus thermophilum (strain ATCC 35947 / DSM 3960 / H-6-12).